The chain runs to 466 residues: Argininosuccinate lyase (466 aa).

2-(N(omega)-L-arginino)succinate is bound by residues Ser27, Asn114, and Thr159. His160 (proton acceptor) is an active-site residue. Ser281 serves as the catalytic Proton donor. Asn289, Tyr321, Gln326, and Lys329 together coordinate 2-(N(omega)-L-arginino)succinate.

The protein belongs to the lyase 1 family. Argininosuccinate lyase subfamily. Homotetramer. Eye lens.

The catalysed reaction is 2-(N(omega)-L-arginino)succinate = fumarate + L-arginine. It functions in the pathway amino-acid biosynthesis; L-arginine biosynthesis; L-arginine from L-ornithine and carbamoyl phosphate: step 3/3. Delta crystallin, the principal crystallin in embryonic lens, is found only in birds and reptiles. This protein also functions as an enzymatically active argininosuccinate lyase. This is Argininosuccinate lyase (ASL) from Anser anser anser (Western greylag goose).